Consider the following 265-residue polypeptide: Hydroxyethylthiazole kinase (265 aa).

Met-55 is a substrate binding site. Positions 130 and 176 each coordinate ATP. Gly-203 contributes to the substrate binding site.

It belongs to the Thz kinase family. Mg(2+) serves as cofactor.

The catalysed reaction is 5-(2-hydroxyethyl)-4-methylthiazole + ATP = 4-methyl-5-(2-phosphooxyethyl)-thiazole + ADP + H(+). Its pathway is cofactor biosynthesis; thiamine diphosphate biosynthesis; 4-methyl-5-(2-phosphoethyl)-thiazole from 5-(2-hydroxyethyl)-4-methylthiazole: step 1/1. In terms of biological role, catalyzes the phosphorylation of the hydroxyl group of 4-methyl-5-beta-hydroxyethylthiazole (THZ). This is Hydroxyethylthiazole kinase from Leptospira interrogans serogroup Icterohaemorrhagiae serovar Lai (strain 56601).